The following is a 754-amino-acid chain: Polyribonucleotide nucleotidyltransferase (754 aa).

The Mg(2+) site is built by D525 and D531. The KH domain maps to 591 to 650; that stretch reads PRITTIKVPVDKIGEVIGPKGKMINSITEETGASISIEDDGTVFVGASNGEAAQAAIDKI. Positions 662–731 constitute an S1 motif domain; that stretch reads GERFLGTVVK…NRGKISLVLV (70 aa).

It belongs to the polyribonucleotide nucleotidyltransferase family. The cofactor is Mg(2+).

The protein localises to the cytoplasm. It carries out the reaction RNA(n+1) + phosphate = RNA(n) + a ribonucleoside 5'-diphosphate. Its function is as follows. Involved in mRNA degradation. Catalyzes the phosphorolysis of single-stranded polyribonucleotides processively in the 3'- to 5'-direction. The protein is Polyribonucleotide nucleotidyltransferase of Mycolicibacterium vanbaalenii (strain DSM 7251 / JCM 13017 / BCRC 16820 / KCTC 9966 / NRRL B-24157 / PYR-1) (Mycobacterium vanbaalenii).